Consider the following 65-residue polypeptide: Large ribosomal subunit protein bL33c (65 aa).

The protein belongs to the bacterial ribosomal protein bL33 family.

It is found in the plastid. The protein resides in the chloroplast. The sequence is that of Large ribosomal subunit protein bL33c from Gracilaria tenuistipitata var. liui (Red alga).